Consider the following 468-residue polypeptide: Transmembrane protein 151B (468 aa).

Residues 1-25 (MPEDGGGDSGDVPEIIPDGEPLREE) form a disordered region. Helical transmembrane passes span 45–65 (CLLL…CRLA) and 98–118 (YLYI…AECW). The interval 384 to 438 (VSSNSLPPARPSGPRLPFSRSRLSLGAGGRATPGVFRSLSGGPLGRRGEDTEPLE) is disordered.

The protein belongs to the TMEM151 family.

It is found in the membrane. The chain is Transmembrane protein 151B (TMEM151B) from Bos taurus (Bovine).